We begin with the raw amino-acid sequence, 397 residues long: Serpin B10 (397 aa).

The short motif at 74–77 is the Nuclear localization signal element; it reads KKRK.

Belongs to the serpin family. Ov-serpin subfamily. In terms of tissue distribution, expressed in many tissues, including brain, heart, kidney, liver, lung, prostate, skin, spleen and stomach.

Its subcellular location is the nucleus. The protein localises to the cytoplasm. Its function is as follows. Protease inhibitor that may play a role in the regulation of protease activities during hematopoiesis and apoptosis induced by TNF. May regulate protease activities in the cytoplasm and in the nucleus. Inhibits plasmin. This Rattus norvegicus (Rat) protein is Serpin B10 (Serpinb10).